Consider the following 166-residue polypeptide: MKFFEIGEIVKSHGLKGRMKAKSYVENGEDLSSVHEAMIVKGKEEPRGYKVRKIVLHKTYFFLELETIDTVESADSLVGSTVLIPEDDRAALSGDEYYWRDLMGLQVVTEEGRFLGRIESIFPTGSNDVYVCAGGSREILLPAISDVILKIDLDKKEMVVRLLPGL.

In terms of domain architecture, PRC barrel spans 94–166 (GDEYYWRDLM…EMVVRLLPGL (73 aa)).

This sequence belongs to the RimM family. Binds ribosomal protein uS19.

It is found in the cytoplasm. In terms of biological role, an accessory protein needed during the final step in the assembly of 30S ribosomal subunit, possibly for assembly of the head region. Essential for efficient processing of 16S rRNA. May be needed both before and after RbfA during the maturation of 16S rRNA. It has affinity for free ribosomal 30S subunits but not for 70S ribosomes. In Syntrophus aciditrophicus (strain SB), this protein is Ribosome maturation factor RimM.